Consider the following 395-residue polypeptide: Major outer membrane protein P.IA (395 aa).

An N-terminal signal peptide occupies residues 1-19 (MRKKLTALVLSALPLAAVA).

This sequence belongs to the Gram-negative porin family. In terms of assembly, homotrimer.

The protein localises to the cell outer membrane. Its function is as follows. Serves as a slightly cation selective porin. Major antigen on the gonococcal cell surface and it may have pathogenic properties in addition to its porin activity. This Neisseria meningitidis serogroup A / serotype 4A (strain DSM 15465 / Z2491) protein is Major outer membrane protein P.IA (porA).